The primary structure comprises 533 residues: Glucose-6-phosphate isomerase (533 aa).

The active-site Proton donor is Glu-322. Active-site residues include His-351 and Lys-455.

This sequence belongs to the GPI family.

The protein localises to the cytoplasm. It carries out the reaction alpha-D-glucose 6-phosphate = beta-D-fructose 6-phosphate. It functions in the pathway carbohydrate biosynthesis; gluconeogenesis. It participates in carbohydrate degradation; glycolysis; D-glyceraldehyde 3-phosphate and glycerone phosphate from D-glucose: step 2/4. Functionally, catalyzes the reversible isomerization of glucose-6-phosphate to fructose-6-phosphate. This Desulfitobacterium hafniense (strain Y51) protein is Glucose-6-phosphate isomerase.